We begin with the raw amino-acid sequence, 303 residues long: Glycine betaine/carnitine/choline-binding protein OpuCC (303 aa).

Residues M1 to G20 form the signal peptide. A lipid anchor (N-palmitoyl cysteine) is attached at C21. Residue C21 is the site of S-diacylglycerol cysteine attachment.

It belongs to the OsmX family. As to quaternary structure, the complex is composed of two ATP-binding proteins (OpuCA), two transmembrane proteins (OpuCB and OpuCD) and a solute-binding protein (OpuCC).

It localises to the cell membrane. In terms of biological role, member of a high affinity multicomponent binding-protein-dependent transport system for glycine betaine, carnitine, and choline. The protein is Glycine betaine/carnitine/choline-binding protein OpuCC (opuCC) of Bacillus subtilis (strain 168).